Reading from the N-terminus, the 292-residue chain is 33 kDa chaperonin (292 aa).

Intrachain disulfides connect cysteine 230–cysteine 232 and cysteine 263–cysteine 266.

The protein belongs to the HSP33 family. Post-translationally, under oxidizing conditions two disulfide bonds are formed involving the reactive cysteines. Under reducing conditions zinc is bound to the reactive cysteines and the protein is inactive.

It localises to the cytoplasm. Functionally, redox regulated molecular chaperone. Protects both thermally unfolding and oxidatively damaged proteins from irreversible aggregation. Plays an important role in the bacterial defense system toward oxidative stress. This chain is 33 kDa chaperonin, found in Escherichia coli O17:K52:H18 (strain UMN026 / ExPEC).